The following is a 323-amino-acid chain: Replication factor C subunit 4 (323 aa).

ATP-binding positions include valine 12, valine 24, 49 to 57 (GMPGIGKTT), asparagine 145, and arginine 203.

The protein belongs to the activator 1 small subunits family. Replication factor C (RFC) is a heteropentamer of subunits RFC1, RFC2, RFC3, RFC4 and RFC5 and forms a complex with POL30/PCNA in the presence of ATP. Component of the RAD24-RFC complex which consists of RAD14, RFC2, RFC3, RFC4 and RFC5 and associates with the checkpoint clamp DDC1:MEC3:RAD17 complex. Component of the ELG1-RFC complex which consists of ELG1, RFC2, RFC3, RFC4 and RFC5. Component of the CTF18-RFC complex, which consists of CTF18, CTF8, DCC1, RFC2, RFC3, RFC4 and RFC5. RFC4 interacts with ECO1.

The protein resides in the nucleus. Its function is as follows. Component of ATP-dependent clamp loader (RFC and RFC-like) complexes for DNA clamps, such as the POL30/PCNA homotrimer and the checkpoint clamp DDC1:MEC3:RAD17 complex. During a clamp loading circle, the RFC:clamp complex binds to DNA and the recognition of the double-stranded/single-stranded junction stimulates ATP hydrolysis by RFC. The complex presumably provides bipartite ATP sites in which one subunit supplies a catalytic site for hydrolysis of ATP bound to the neighboring subunit. Dissociation of RFC from the clamp leaves the clamp encircling DNA. Component of the replication factor C (RFC or activator 1) complex which loads POL30/PCNA and acts during elongation of primed DNA templates by DNA polymerase delta and epsilon. RFC has an essential but redundant activity in sister chromatid cohesion establishment. Component of the RFC-like complex CTF18-RFC which is required for efficient establishment of chromosome cohesion during S-phase and may load or unload POL30/PCNA. Component of the RFC-like RAD24-RFC complex which loads the checkpoint clamp DDC1:MEC3:RAD17 complex and is involved in DNA repair pathways. Component of the RFC-like ELG1-RFC complex which appears to have a role in DNA replication, replication fork re-start, recombination and repair. This is Replication factor C subunit 4 (RFC4) from Saccharomyces cerevisiae (strain ATCC 204508 / S288c) (Baker's yeast).